Reading from the N-terminus, the 338-residue chain is Lumican (338 aa).

Positions 1–18 (MSLSAFTLFLALIGGTSG) are cleaved as a signal peptide. Q19 is subject to Pyrrolidone carboxylic acid. Y20, Y21, Y23, and Y30 each carry sulfotyrosine. Residues 28 to 66 (SIYGQSSPNCAPECNCPESYPSAMYCDELKLKSVPMVPP) form the LRRNT domain. LRR repeat units follow at residues 67-88 (GIKY…AFEN), 91-114 (DLQW…VFSK), 117-137 (QLKK…PLPK), 138-159 (SLED…EGLV), 160-181 (NLTF…AAFK), 185-205 (SLEY…GLPV), 206-227 (SLLT…YFKR), 230-253 (ALQY…SFNV), 255-276 (SLVE…NENL), and 277-296 (ENYY…SFCK). An N-linked (GlcNAc...) (keratan sulfate) asparagine glycan is attached at N88. An N-linked (GlcNAc...) (keratan sulfate) asparagine glycan is attached at N127. An N-linked (GlcNAc...) (keratan sulfate) asparagine glycan is attached at N160. N-linked (GlcNAc...) (keratan sulfate) asparagine glycosylation occurs at N252. C295 and C328 are disulfide-bonded. Position 304 is a phosphoserine (S304). One copy of the LRR 11 repeat lies at 305–326 (KIKHLRLDGNRISETSLPPDMY).

The protein belongs to the small leucine-rich proteoglycan (SLRP) family. SLRP class II subfamily. Binds to laminin. In terms of processing, sulfated on tyrosine residue(s). Contains keratan sulfate. In terms of tissue distribution, cornea and other tissues.

It is found in the secreted. It localises to the extracellular space. Its subcellular location is the extracellular matrix. The chain is Lumican (LUM) from Homo sapiens (Human).